The sequence spans 94 residues: Large ribosomal subunit protein uL23 (94 aa).

Belongs to the universal ribosomal protein uL23 family. As to quaternary structure, part of the 50S ribosomal subunit. Contacts protein L29, and trigger factor when it is bound to the ribosome.

In terms of biological role, one of the early assembly proteins it binds 23S rRNA. One of the proteins that surrounds the polypeptide exit tunnel on the outside of the ribosome. Forms the main docking site for trigger factor binding to the ribosome. This Roseiflexus sp. (strain RS-1) protein is Large ribosomal subunit protein uL23.